The chain runs to 158 residues: uncharacterized protein (158 aa).

The segment at 1–26 is disordered; the sequence is MRASRSPPSPRRCHHHHEATGAASGA.

This is an uncharacterized protein from Homo sapiens (Human).